The following is a 210-amino-acid chain: HTH-type transcriptional regulator MtrR (210 aa).

The HTH tetR-type domain occupies 9-69; that stretch reads LKTKEHLMLA…ALFQRICDDI (61 aa). Positions 32 to 51 form a DNA-binding region, H-T-H motif; sequence SLNEIAQAAGVTRGALYWHF.

In terms of assembly, homodimer. Binds to DNA as a pair of dimers.

Its activity is regulated as follows. DNA binding is affected significantly by increasing the NaCl concentration. Functionally, controls the permeability of the cell envelope to hydrophobic compounds such as antibiotics and detergents. Represses transcription of the mtrCDE-encoded efflux pump by binding within the mtrCDE promoter. Also negatively regulates the expression of farR, by binding to its promoter region, leading indirectly to the positive regulation of expression of the farAB-encoded efflux pump. This Neisseria gonorrhoeae protein is HTH-type transcriptional regulator MtrR.